Reading from the N-terminus, the 256-residue chain is Thiazole synthase (256 aa).

Lys-99 acts as the Schiff-base intermediate with DXP in catalysis. Residues Gly-160, 186–187 (AG), and 208–209 (NT) each bind 1-deoxy-D-xylulose 5-phosphate.

Belongs to the ThiG family. As to quaternary structure, homotetramer. Forms heterodimers with either ThiH or ThiS.

It is found in the cytoplasm. It carries out the reaction [ThiS sulfur-carrier protein]-C-terminal-Gly-aminoethanethioate + 2-iminoacetate + 1-deoxy-D-xylulose 5-phosphate = [ThiS sulfur-carrier protein]-C-terminal Gly-Gly + 2-[(2R,5Z)-2-carboxy-4-methylthiazol-5(2H)-ylidene]ethyl phosphate + 2 H2O + H(+). It participates in cofactor biosynthesis; thiamine diphosphate biosynthesis. Its function is as follows. Catalyzes the rearrangement of 1-deoxy-D-xylulose 5-phosphate (DXP) to produce the thiazole phosphate moiety of thiamine. Sulfur is provided by the thiocarboxylate moiety of the carrier protein ThiS. In vitro, sulfur can be provided by H(2)S. The chain is Thiazole synthase from Neorickettsia sennetsu (strain ATCC VR-367 / Miyayama) (Ehrlichia sennetsu).